We begin with the raw amino-acid sequence, 185 residues long: ATP synthase subunit b 2 (185 aa).

The interval 1 to 23 is disordered; that stretch reads MAEGHGDAKGATAHTAADGGHKA. Positions 9 to 18 are enriched in low complexity; it reads KGATAHTAAD. Residues 32-51 traverse the membrane as a helical segment; it reads TFASQLVSLTIAFVALYLIV.

This sequence belongs to the ATPase B chain family. As to quaternary structure, F-type ATPases have 2 components, F(1) - the catalytic core - and F(0) - the membrane proton channel. F(1) has five subunits: alpha(3), beta(3), gamma(1), delta(1), epsilon(1). F(0) has three main subunits: a(1), b(2) and c(10-14). The alpha and beta chains form an alternating ring which encloses part of the gamma chain. F(1) is attached to F(0) by a central stalk formed by the gamma and epsilon chains, while a peripheral stalk is formed by the delta and b chains.

The protein resides in the cell inner membrane. F(1)F(0) ATP synthase produces ATP from ADP in the presence of a proton or sodium gradient. F-type ATPases consist of two structural domains, F(1) containing the extramembraneous catalytic core and F(0) containing the membrane proton channel, linked together by a central stalk and a peripheral stalk. During catalysis, ATP synthesis in the catalytic domain of F(1) is coupled via a rotary mechanism of the central stalk subunits to proton translocation. In terms of biological role, component of the F(0) channel, it forms part of the peripheral stalk, linking F(1) to F(0). The b'-subunit is a diverged and duplicated form of b found in plants and photosynthetic bacteria. In Rhodopseudomonas palustris (strain HaA2), this protein is ATP synthase subunit b 2 (atpF2).